Reading from the N-terminus, the 457-residue chain is tRNA-2-methylthio-N(6)-dimethylallyladenosine synthase (457 aa).

One can recognise an MTTase N-terminal domain in the interval 8 to 123 (KKVFIKTFGC…LPEMLARRDA (116 aa)). The [4Fe-4S] cluster site is built by Cys-17, Cys-54, Cys-86, Cys-160, Cys-164, and Cys-167. Residues 146-379 (RVDGATAFVS…QEAIEANGRR (234 aa)) form the Radical SAM core domain. A TRAM domain is found at 382 to 449 (QSRVGTVQRI…PHSLRGEVLL (68 aa)).

Belongs to the methylthiotransferase family. MiaB subfamily. As to quaternary structure, monomer. It depends on [4Fe-4S] cluster as a cofactor.

It localises to the cytoplasm. The enzyme catalyses N(6)-dimethylallyladenosine(37) in tRNA + (sulfur carrier)-SH + AH2 + 2 S-adenosyl-L-methionine = 2-methylsulfanyl-N(6)-dimethylallyladenosine(37) in tRNA + (sulfur carrier)-H + 5'-deoxyadenosine + L-methionine + A + S-adenosyl-L-homocysteine + 2 H(+). Catalyzes the methylthiolation of N6-(dimethylallyl)adenosine (i(6)A), leading to the formation of 2-methylthio-N6-(dimethylallyl)adenosine (ms(2)i(6)A) at position 37 in tRNAs that read codons beginning with uridine. This is tRNA-2-methylthio-N(6)-dimethylallyladenosine synthase from Methylibium petroleiphilum (strain ATCC BAA-1232 / LMG 22953 / PM1).